The following is a 437-amino-acid chain: Magnetosome protein MamN (437 aa).

A run of 11 helical transmembrane segments spans residues 26–46 (LAVL…GTYT), 53–73 (SIYF…ALLA), 95–115 (WILV…NSLI), 136–156 (VPVI…TMIG), 174–194 (FIGG…LFFE), 229–249 (YGLI…PLKV), 252–268 (GWIA…LGRF), 281–301 (DILF…VGIL), 320–340 (AILL…GTSA), 358–378 (AAWW…LSGA), and 416–436 (WGLP…AVLA).

The protein belongs to the arsenite-antimonite (ArsB) efflux (TC 2.A.45) family.

It localises to the magnetosome membrane. Its function is as follows. Plays a role in biomineralization; might regulate pH in the magnetosome. The sequence is that of Magnetosome protein MamN from Magnetospirillum gryphiswaldense (strain DSM 6361 / JCM 21280 / NBRC 15271 / MSR-1).